A 508-amino-acid chain; its full sequence is Photosystem II CP47 reaction center protein (508 aa).

The next 6 membrane-spanning stretches (helical) occupy residues Ala21 to Ser36, Ile101 to Trp115, Gly140 to Phe156, Ile203 to Thr218, Val237 to Val252, and Ser457 to Arg472.

Belongs to the PsbB/PsbC family. PsbB subfamily. In terms of assembly, PSII is composed of 1 copy each of membrane proteins PsbA, PsbB, PsbC, PsbD, PsbE, PsbF, PsbH, PsbI, PsbJ, PsbK, PsbL, PsbM, PsbT, PsbX, PsbY, PsbZ, Psb30/Ycf12, peripheral proteins PsbO, CyanoQ (PsbQ), PsbU, PsbV and a large number of cofactors. It forms dimeric complexes. It depends on Binds multiple chlorophylls. PSII binds additional chlorophylls, carotenoids and specific lipids. as a cofactor.

It is found in the cellular thylakoid membrane. In terms of biological role, one of the components of the core complex of photosystem II (PSII). It binds chlorophyll and helps catalyze the primary light-induced photochemical processes of PSII. PSII is a light-driven water:plastoquinone oxidoreductase, using light energy to abstract electrons from H(2)O, generating O(2) and a proton gradient subsequently used for ATP formation. This Synechococcus elongatus (strain ATCC 33912 / PCC 7942 / FACHB-805) (Anacystis nidulans R2) protein is Photosystem II CP47 reaction center protein.